The sequence spans 234 residues: HTH-type transcriptional regulator ArcR (234 aa).

40 to 129 (VRHYTKGQVI…MAFLCKANDD (90 aa)) is a binding site for a nucleoside 3',5'-cyclic phosphate. Positions 155–228 (KFAKDRIIKL…HKNWLVSKHL (74 aa)) constitute an HTH crp-type domain. The H-T-H motif DNA-binding region spans 188–207 (IQLMSDMAGISRETAGHIIH).

The protein resides in the cytoplasm. In terms of biological role, positively regulates the expression of the arcABDCR operon under anaerobic conditions, thus playing an essential role in arginine catabolism. May also control the expression of genes encoding proteins which are involved in anaerobic metabolism. Can bind cyclic AMP. In Staphylococcus aureus (strain USA300 / TCH1516), this protein is HTH-type transcriptional regulator ArcR (arcR).